A 1336-amino-acid chain; its full sequence is Zinc finger protein 335 (1336 aa).

Disordered stretches follow at residues 1–108 and 199–222; these read MEEN…LVHS and PTST…LAQP. Low complexity-rich tracts occupy residues 31-45 and 54-65; these read TSEA…AATA and SGVGQSSDSGSR. The segment at 247 to 270 adopts a C2H2-type 1 zinc-finger fold; sequence FKCKMCQYRSSTKATLLRHMRERH. Disordered stretches follow at residues 282–398 and 415–442; these read AGKR…PSSS and VSQS…GRPS. A compositionally biased stretch (acidic residues) spans 300–331; it reads EEGPEEEEEDDDIVDAGAIDDLEEDSDYNPAE. A compositionally biased stretch (low complexity) spans 339–349; sequence LRLQRPTPSTL. The span at 350–361 shows a compositional bias: basic residues; it reads RPRRRPGRPRKL. Basic and acidic residues predominate over residues 362 to 373; that stretch reads PRLETSDLHDGI. Residues 378-387 are compositionally biased toward polar residues; that stretch reads VSSQSTQSPP. C2H2-type zinc fingers lie at residues 465–487, 495–517, 523–545, 562–584, 590–612, 621–643, 649–672, and 678–701; these read YLCR…VNSH, FKCL…MFNH, YKCD…AAVH, FPCP…MKTH, HMCD…LLTH, FKCE…QLSH, FKCS…AVKH, and FACE…RCRH. Disordered regions lie at residues 732-766 and 961-1013; these read LKQQ…TPPL and LQCG…AAAS. Residues 752–766 are compositionally biased toward pro residues; it reads PQEPAPFQPPETPPL. Residues Ser-975 and Ser-1006 each carry the phosphoserine modification. 4 C2H2-type zinc fingers span residues 1018 to 1040, 1046 to 1068, 1074 to 1096, and 1102 to 1125; these read FSCK…KRAH, FKCP…MAQH, HQCN…MLTH, and FSCH…QRLH. A Glycyl lysine isopeptide (Lys-Gly) (interchain with G-Cter in SUMO2) cross-link involves residue Lys-1021. Ser-1148 is subject to Phosphoserine.

Belongs to the krueppel C2H2-type zinc-finger protein family. As to quaternary structure, interacts with NCOA6; may enhance ligand-dependent transcriptional activation by nuclear hormone receptors. Interacts with CNOT6. Interacts with CNOT9; the interaction is direct. Component of a nuclear receptor-mediated transcription complex composed of at least ZNF335, CCAR2 and EMSY; the complex stimulates the transcription of nuclear receptor target genes such as SOX9 and HOXA1. Within the complex interacts with EMSY and interacts (via C-terminus) with CCAR2. Interacts with members of histone H3'Lys4'(H3K4) methyltransferase complexes ASH2L, CXXC1, KMT2A/MLL1, RBBP5, SETD1A and WDR5. Component of a histone methylation complex composed of at least ZNF335, RBBP5, ASH2L and WDR5; the complex may have histone H3-specific methyltransferase activity, however does not have specificity for 'Lys-4' of histone H3. Interacts with RBBP5 and WDR5. Interacts with ASHL2. Components of this complex may associate with components of the ZNF335-CCAR2-EMSY nuclear receptor-mediated transcription complex to form a complex at least composed of ZNF335, HCFC1, CCAR2, EMSY, MKI67, RBBP5, ASH2L and WDR5. Within this complex also interacts with HCFC1 and MKI67.

The protein resides in the nucleus. In terms of biological role, component or associated component of some histone methyltransferase complexes may regulate transcription through recruitment of those complexes on gene promoters. Enhances ligand-dependent transcriptional activation by nuclear hormone receptors. Plays an important role in neural progenitor cell proliferation and self-renewal through the regulation of specific genes involved brain development, including REST. Also controls the expression of genes involved in somatic development and regulates, for instance, lymphoblast proliferation. This Rattus norvegicus (Rat) protein is Zinc finger protein 335 (Znf335).